A 244-amino-acid chain; its full sequence is MKMVSDINALKYKKVLLKVSGEALMGNKQFGHEYEVIKKIAEDIKEVIDLGLEVAIVVGGGNIYRGINAALVGMDRASADYIGMLATVINALTLQNVMESLGIYTRVLSAIPMMSVCEPYIRRKAKRHMEKKRVVIFAGGTGNPFCTTDSAAVLRAIEMNCDILLKATQVDGVYDSDPKKNPNAKKYFTISYKDVITNHLQVMDTAAIAVARENKLPIRVFSIKEHGNIARVIQNKGKYTTIEE.

18–21 (KVSG) is an ATP binding site. UMP is bound at residue glycine 60. Residues glycine 61 and arginine 65 each coordinate ATP. Residues aspartate 80 and 141-148 (TGNPFCTT) each bind UMP. Residues threonine 168, glutamine 169, tyrosine 174, and aspartate 177 each contribute to the ATP site.

It belongs to the UMP kinase family. Homohexamer.

The protein resides in the cytoplasm. It catalyses the reaction UMP + ATP = UDP + ADP. The protein operates within pyrimidine metabolism; CTP biosynthesis via de novo pathway; UDP from UMP (UMPK route): step 1/1. Its activity is regulated as follows. Inhibited by UTP. In terms of biological role, catalyzes the reversible phosphorylation of UMP to UDP. The sequence is that of Uridylate kinase from Rickettsia typhi (strain ATCC VR-144 / Wilmington).